A 320-amino-acid chain; its full sequence is ATP-dependent 6-phosphofructokinase (320 aa).

An ATP-binding site is contributed by Gly-12. Position 22 to 26 (22 to 26 (RGVVR)) interacts with ADP. ATP-binding positions include 73–74 (RF) and 103–106 (GDGS). Position 104 (Asp-104) interacts with Mg(2+). 126 to 128 (TID) serves as a coordination point for substrate. Catalysis depends on Asp-128, which acts as the Proton acceptor. Arg-155 serves as a coordination point for ADP. Residues Arg-163 and 170–172 (MGR) contribute to the substrate site. Residues 186–188 (GCE), Lys-212, and 214–216 (KKH) contribute to the ADP site. Substrate contacts are provided by residues Glu-223, Arg-244, and 250–253 (HIQR).

It belongs to the phosphofructokinase type A (PFKA) family. ATP-dependent PFK group I subfamily. Prokaryotic clade 'B1' sub-subfamily. As to quaternary structure, homotetramer. Requires Mg(2+) as cofactor.

The protein localises to the cytoplasm. It catalyses the reaction beta-D-fructose 6-phosphate + ATP = beta-D-fructose 1,6-bisphosphate + ADP + H(+). Its pathway is carbohydrate degradation; glycolysis; D-glyceraldehyde 3-phosphate and glycerone phosphate from D-glucose: step 3/4. With respect to regulation, allosterically activated by ADP and other diphosphonucleosides, and allosterically inhibited by phosphoenolpyruvate. Catalyzes the phosphorylation of D-fructose 6-phosphate to fructose 1,6-bisphosphate by ATP, the first committing step of glycolysis. This Blochmanniella floridana protein is ATP-dependent 6-phosphofructokinase.